The chain runs to 421 residues: uncharacterized protein (421 aa).

2 coiled-coil regions span residues 126 to 182 (YART…IQKI) and 328 to 397 (YQVE…RLTL).

This is an uncharacterized protein from Treponema pallidum (strain Nichols).